Reading from the N-terminus, the 297-residue chain is PsbP domain-containing protein 5, chloroplastic (297 aa).

It belongs to the PsbP family.

Its subcellular location is the plastid. It localises to the chloroplast thylakoid lumen. Involved in strigolactone biosynthesis. The chain is PsbP domain-containing protein 5, chloroplastic (PPD5) from Arabidopsis thaliana (Mouse-ear cress).